The chain runs to 376 residues: Lipid-A-disaccharide synthase (376 aa).

It belongs to the LpxB family.

It carries out the reaction a lipid X + a UDP-2-N,3-O-bis[(3R)-3-hydroxyacyl]-alpha-D-glucosamine = a lipid A disaccharide + UDP + H(+). It participates in bacterial outer membrane biogenesis; LPS lipid A biosynthesis. Condensation of UDP-2,3-diacylglucosamine and 2,3-diacylglucosamine-1-phosphate to form lipid A disaccharide, a precursor of lipid A, a phosphorylated glycolipid that anchors the lipopolysaccharide to the outer membrane of the cell. This chain is Lipid-A-disaccharide synthase, found in Coxiella burnetii (strain CbuK_Q154) (Coxiella burnetii (strain Q154)).